A 777-amino-acid polypeptide reads, in one-letter code: MAEVSAKSVTVEEMAEEDDAAIEERWSLYEAYNELHALAQELETPFEAPAVLVVGQQTDGKSALVEALMGFQFNHVGGGTKTRRPITLHMKYDPQCQFPLCHLGSDDDPSVSLPKSLSQIQAYIEAENMRLEQEPCSPFSAKEIIVKVQYKYCPNLTIIDTPGLIAPAPGLKNRALQVQARAVEALVRAKMQHKEFIILCLEDSSDWSIATTRRIVMQVDPELSRTIVVSTKLDTKIPQFSCSSDVEVFLSPPASALDSSLLGDSPFFTSVPSGRVGYGQDSVYKSNDEFKQAVSLREMEDIASLEKKLGRLLTKQEKSRIGISKLRLFLEELLWKRYKESVPLIIPLLGKEYRSTVRKLDTVSKELSSLDEAKLKERGRTFHDLFLTKLSLLLKGTVVAPPDKFGETLQDERTQGGAFVGTDGLQFSHKLIPNAGMRLYGGAQYHRAMAEFRFLVGAIKCPPITREEIVNACGVEDIHDGTNYSRTACVIAVAKARETFEPFLHQLGARLLHILKRLLPISVYLLQKEGEYLSGHEVFLKRVASAFNSFVESTEKSCRDKCMEDLASTTRYVTWSLHNKNRAGLRQFLDSFGGTEHNTTSGNAIGFSLPQDALGGTTDTKSRSDVKLSHLASNIDSGSSIQTTEMRLADLLDSTLWNRKLAPSSERIVYALVQQIFQGIREYFLASAELKFNCFLLMPIVDKLPALLREELENAFEDDLDSIFDITNLRQSLDQKKRSTEIELRRIKRIKEKFRVMNEKLNSHEFAQNLKAPSVQH.

Residues 45–343 (PFEAPAVLVV…LWKRYKESVP (299 aa)) enclose the Dynamin-type G domain. A G1 motif region spans residues 55-62 (GQQTDGKS). 55–62 (GQQTDGKS) serves as a coordination point for GTP. The G2 motif stretch occupies residues 81–83 (KTR). The G3 motif stretch occupies residues 160–163 (DTPG). Residues 160-164 (DTPGL) and 231-234 (TKLD) contribute to the GTP site. Residues 231–234 (TKLD) are G4 motif. Positions 265–268 (SPFF) are G5 motif. Coiled-coil stretches lie at residues 300–320 (EDIASLEKKLGRLLTKQEKSR) and 728–765 (NLRQSLDQKKRSTEIELRRIKRIKEKFRVMNEKLNSHE).

The protein belongs to the TRAFAC class dynamin-like GTPase superfamily. Dynamin/Fzo/YdjA family. As to quaternary structure, forms a homodimer and heterodimers with DRP3A and DRP3B on peroxisomes. Also interacts with FIS1A (but not FIS1B) and PEX11 proteins (PEX11A, PEX11B, PEX11C, PEX11D and PEX11E) on peroxisomes. Interacts with PDV1 and PDV2. Stabilized at the plastid outer envelope membranes (OEMs) in the constriction site when in complex with GTP, but destabilized after conversion of GTP into GDP leading to turnover with a cytosolic pool.

It localises to the cytoplasm. The protein resides in the plastid. It is found in the chloroplast outer membrane. Its subcellular location is the peroxisome. The protein localises to the cytosol. It carries out the reaction GTP + H2O = GDP + phosphate + H(+). GTPase activity is repressed by PDV2 thus increasing stability at the plastid outer envelope membranes (OEMs) periphery. Mechanochemical GTPase component of both plastid and peroxisome division machinery. Required for the last steps of plastid division specifically in mesophyll-cell, when the narrow isthmus breaks, facilitating the separation of the daughter plastids. Necessary for peroxisome activities. Seems to influence stromule (stroma-filled tubular extensions of the plastid envelope membrane) length and frequency. The polypeptide is Dynamin-like protein ARC5 (Arabidopsis thaliana (Mouse-ear cress)).